A 250-amino-acid polypeptide reads, in one-letter code: Triosephosphate isomerase, cytosolic (250 aa).

2 residues coordinate substrate: asparagine 1 and lysine 3. The Electrophile role is filled by histidine 87. Residue glutamate 160 is the Proton acceptor of the active site.

It belongs to the triosephosphate isomerase family. As to quaternary structure, homodimer.

Its subcellular location is the cytoplasm. It catalyses the reaction D-glyceraldehyde 3-phosphate = dihydroxyacetone phosphate. Its pathway is carbohydrate biosynthesis; gluconeogenesis. The protein operates within carbohydrate degradation; glycolysis; D-glyceraldehyde 3-phosphate from glycerone phosphate: step 1/1. The protein is Triosephosphate isomerase, cytosolic (TPI1) of Gracilaria gracilis (Red alga).